Consider the following 115-residue polypeptide: Large ribosomal subunit protein bL19 (115 aa).

Belongs to the bacterial ribosomal protein bL19 family.

This protein is located at the 30S-50S ribosomal subunit interface and may play a role in the structure and function of the aminoacyl-tRNA binding site. This chain is Large ribosomal subunit protein bL19, found in Leifsonia xyli subsp. xyli (strain CTCB07).